Here is a 379-residue protein sequence, read N- to C-terminus: tRNA-specific 2-thiouridylase MnmA (379 aa).

ATP is bound by residues 6–13 (AMSGGVDS) and leucine 32. Cysteine 101 functions as the Nucleophile in the catalytic mechanism. Cysteine 101 and cysteine 199 are disulfide-bonded. Glycine 125 provides a ligand contact to ATP. Positions 148-150 (KDQ) are interaction with tRNA. Cysteine 199 (cysteine persulfide intermediate) is an active-site residue.

Belongs to the MnmA/TRMU family.

The protein localises to the cytoplasm. It carries out the reaction S-sulfanyl-L-cysteinyl-[protein] + uridine(34) in tRNA + AH2 + ATP = 2-thiouridine(34) in tRNA + L-cysteinyl-[protein] + A + AMP + diphosphate + H(+). In terms of biological role, catalyzes the 2-thiolation of uridine at the wobble position (U34) of tRNA, leading to the formation of s(2)U34. In Paenarthrobacter aurescens (strain TC1), this protein is tRNA-specific 2-thiouridylase MnmA.